Consider the following 199-residue polypeptide: Thymidylate kinase (199 aa).

7–14 serves as a coordination point for ATP; it reads GIDGSGKS.

Belongs to the thymidylate kinase family.

The catalysed reaction is dTMP + ATP = dTDP + ADP. In terms of biological role, phosphorylation of dTMP to form dTDP in both de novo and salvage pathways of dTTP synthesis. The sequence is that of Thymidylate kinase from Thermosipho melanesiensis (strain DSM 12029 / CIP 104789 / BI429).